A 280-amino-acid chain; its full sequence is uncharacterized protein (280 aa).

This sequence to E.coli YgfZ (UP14) and B.aphidicola (subsp. Acyrthosiphon pisum) BU435.

This is an uncharacterized protein from Haemophilus influenzae (strain ATCC 51907 / DSM 11121 / KW20 / Rd).